Consider the following 420-residue polypeptide: Exodeoxyribonuclease 7 large subunit (420 aa).

It belongs to the XseA family. In terms of assembly, heterooligomer composed of large and small subunits.

It is found in the cytoplasm. The enzyme catalyses Exonucleolytic cleavage in either 5'- to 3'- or 3'- to 5'-direction to yield nucleoside 5'-phosphates.. In terms of biological role, bidirectionally degrades single-stranded DNA into large acid-insoluble oligonucleotides, which are then degraded further into small acid-soluble oligonucleotides. The polypeptide is Exodeoxyribonuclease 7 large subunit (Helicobacter acinonychis (strain Sheeba)).